The chain runs to 1391 residues: DNA-directed RNA polymerase subunit beta' (1391 aa).

Zn(2+) contacts are provided by C70, C72, C85, and C88. 3 residues coordinate Mg(2+): D461, D463, and D465. 4 residues coordinate Zn(2+): C809, C882, C889, and C892.

The protein belongs to the RNA polymerase beta' chain family. In terms of assembly, the RNAP catalytic core consists of 2 alpha, 1 beta, 1 beta' and 1 omega subunit. When a sigma factor is associated with the core the holoenzyme is formed, which can initiate transcription. The cofactor is Mg(2+). Requires Zn(2+) as cofactor.

The enzyme catalyses RNA(n) + a ribonucleoside 5'-triphosphate = RNA(n+1) + diphosphate. In terms of biological role, DNA-dependent RNA polymerase catalyzes the transcription of DNA into RNA using the four ribonucleoside triphosphates as substrates. The sequence is that of DNA-directed RNA polymerase subunit beta' from Zymomonas mobilis subsp. mobilis (strain ATCC 31821 / ZM4 / CP4).